Reading from the N-terminus, the 151-residue chain is MATSPMLFLVSLLLVLVAAATGDEASPSNAAAPAAPVLVGGRTEIRDVGSNKAVQSLGRFAVAEHNRRLRHGGSGGPADPVPVKLAFARVVEAQKQVVSGVAYYLKVAASARDPRGGAAAGGDRVFDAVVVVKAWLKSKELVSFTPASSTK.

The first 22 residues, 1 to 22 (MATSPMLFLVSLLLVLVAAATG), serve as a signal peptide directing secretion. Residues 40–109 (GGRTEIRDVG…GVAYYLKVAA (70 aa)) enclose the Cystatin domain. The Secondary area of contact motif lies at 96–100 (QVVSG).

This sequence belongs to the cystatin family. Phytocystatin subfamily.

The protein localises to the secreted. In terms of biological role, specific inhibitor of cysteine proteinases. Probably involved in the regulation of endogenous processes and in defense against pests and pathogens. The sequence is that of Cysteine proteinase inhibitor 10 from Oryza sativa subsp. indica (Rice).